Consider the following 384-residue polypeptide: GDP/UDP-N,N'-diacetylbacillosamine 2-epimerase (hydrolyzing) (384 aa).

This sequence belongs to the UDP-N-acetylglucosamine 2-epimerase family.

The enzyme catalyses GDP-N,N'-diacetylbacillosamine + H2O = 2,4-diacetamido-2,4,6-trideoxy-alpha-D-mannopyranose + GDP + H(+). It catalyses the reaction UDP-N,N'-diacetylbacillosamine + H2O = 2,4-diacetamido-2,4,6-trideoxy-alpha-D-mannopyranose + UDP + H(+). In terms of biological role, involved in biosynthesis of legionaminic acid (5,7-diamino-3,5,7,9-tetradeoxy-D-glycero-D-galacto-non-2-ulosonic acid)(Leg), a sialic acid-like derivative that is incorporated into flagellin via O-linkage to Ser/Thr. Catalyzes the conversion of GDP-N,N'-diacetylbacillosamine (Bac2Ac4Ac) into 2,4-diacetamido-2,4,6-trideoxymannose and GDP. It can also use UDP-N,N'-diacetylbacillosamine however it generates small quantities of 2,4-diacetamido-2,4,6-trideoxymannose. In Campylobacter jejuni subsp. jejuni serotype O:2 (strain ATCC 700819 / NCTC 11168), this protein is GDP/UDP-N,N'-diacetylbacillosamine 2-epimerase (hydrolyzing) (legG).